The sequence spans 109 residues: Mannose-specific lectin (109 aa).

One can recognise a Bulb-type lectin domain in the interval 1 to 109; the sequence is DNILYSSEVL…PPIWATGTGR (109 aa). An intrachain disulfide couples Cys-29 to Cys-52. Residues 79–82 constitute a propeptide that is removed on maturation; that stretch reads TGTN.

As to quaternary structure, homotrimer or homotetramer.

The protein resides in the secreted. Mannose-specific lectin. Shows agglutinating activity toward rabbit erythrocytes and mitogenic activity towards mouse lymphocytes. The polypeptide is Mannose-specific lectin (Aloe arborescens (Kidachi aloe)).